The primary structure comprises 208 residues: FMN-dependent NADH:quinone oxidoreductase (208 aa).

FMN-binding positions include 17–19 (SNS), 99–102 (MWNL), and 143–146 (SRGG).

Belongs to the azoreductase type 1 family. As to quaternary structure, homodimer. It depends on FMN as a cofactor.

The catalysed reaction is 2 a quinone + NADH + H(+) = 2 a 1,4-benzosemiquinone + NAD(+). It catalyses the reaction N,N-dimethyl-1,4-phenylenediamine + anthranilate + 2 NAD(+) = 2-(4-dimethylaminophenyl)diazenylbenzoate + 2 NADH + 2 H(+). Its function is as follows. Quinone reductase that provides resistance to thiol-specific stress caused by electrophilic quinones. In terms of biological role, also exhibits azoreductase activity. Catalyzes the reductive cleavage of the azo bond in aromatic azo compounds to the corresponding amines. In Staphylococcus aureus (strain MSSA476), this protein is FMN-dependent NADH:quinone oxidoreductase.